The sequence spans 110 residues: Large ribosomal subunit protein uL22 (110 aa).

This sequence belongs to the universal ribosomal protein uL22 family. Part of the 50S ribosomal subunit.

Functionally, this protein binds specifically to 23S rRNA; its binding is stimulated by other ribosomal proteins, e.g. L4, L17, and L20. It is important during the early stages of 50S assembly. It makes multiple contacts with different domains of the 23S rRNA in the assembled 50S subunit and ribosome. The globular domain of the protein is located near the polypeptide exit tunnel on the outside of the subunit, while an extended beta-hairpin is found that lines the wall of the exit tunnel in the center of the 70S ribosome. This chain is Large ribosomal subunit protein uL22, found in Shewanella denitrificans (strain OS217 / ATCC BAA-1090 / DSM 15013).